Reading from the N-terminus, the 473-residue chain is Bestrophin-4 (473 aa).

The Cytoplasmic portion of the chain corresponds to 1–31 (MTVSYTLKVAEARFGGFSGLLLRWRGSIYKL). Residue A10 coordinates Ca(2+). Residues 32 to 51 (LYKEFLLFGALYAVLSITYR) traverse the membrane as a helical segment. Over 52–60 (LLLTQEQRY) the chain is Extracellular. The helical transmembrane segment at 61–82 (VYAQVARYCNRSADLIPLSFVL) threads the bilayer. The Cytoplasmic segment spans residues 83–237 (GFYVTLVVNR…DWISIPLVYT (155 aa)). Residues 238-255 (QVVTIAVYSFFALSLVGR) traverse the membrane as a helical segment. At 256–289 (QFVEPEAGAAKPQKLLKPGQEPAPALGDPDMYVP) the chain is on the extracellular side. The helical transmembrane segment at 290–303 (LTTLLQFFFYAGWL) threads the bilayer. The Cytoplasmic portion of the chain corresponds to 304 to 473 (KVAEQIINPF…AESGDEALEP (170 aa)). Residues Q308, N311, D316, and D319 each coordinate Ca(2+). Disordered stretches follow at residues 379–408 (TFNL…PAAQ) and 428–473 (RNFG…ALEP). Low complexity predominate over residues 396–407 (ASPGSGRPAPAA). Residues 445–461 (FRAEEGGDPEAAARIEE) show a composition bias toward basic and acidic residues. The segment covering 462-473 (ESAESGDEALEP) has biased composition (acidic residues).

Belongs to the anion channel-forming bestrophin (TC 1.A.46) family. Calcium-sensitive chloride channel subfamily. As to expression, predominantly found in colon and the weakly in fetal brain, spinal cord, retina, lung, trachea, testis and placenta.

It localises to the cell membrane. It carries out the reaction chloride(in) = chloride(out). The enzyme catalyses hydrogencarbonate(in) = hydrogencarbonate(out). Its function is as follows. Ligand-gated anion channel that allows the movement of anions across cell membranes when activated by Calcium (Ca2+). Mediates the movement of hydrogencarbonate and chloride. The protein is Bestrophin-4 of Homo sapiens (Human).